The primary structure comprises 536 residues: UDP-glucuronosyltransferase 2A2 (536 aa).

Over 1-15 the chain is Cytoplasmic; it reads MVSIRDFTMPKKFVQ. A helical membrane pass occupies residues 16–36; that stretch reads MLVFNLTLTEVVLSGNVLIWP. Residues 37–500 lie on the Lumenal side of the membrane; sequence TDGSHWLNIK…TWFQYHSLDV (464 aa). Residues Asn58, Asn322, and Asn356 are each glycosylated (N-linked (GlcNAc...) asparagine). A helical membrane pass occupies residues 501–521; that stretch reads IGFLLVCVTTAIFLVIQCCLF. At 522-536 the chain is on the cytoplasmic side; that stretch reads SCQKFGKIGKKKKRE.

The protein belongs to the UDP-glycosyltransferase family. As to expression, mainly expressed in the nasal mucosa.

It is found in the endoplasmic reticulum membrane. It catalyses the reaction glucuronate acceptor + UDP-alpha-D-glucuronate = acceptor beta-D-glucuronoside + UDP + H(+). The enzyme catalyses 17alpha-estradiol + UDP-alpha-D-glucuronate = 17alpha-estradiol 3-O-(beta-D-glucuronate) + UDP + H(+). It carries out the reaction 17beta-estradiol + UDP-alpha-D-glucuronate = 17beta-estradiol 3-O-(beta-D-glucuronate) + UDP + H(+). The catalysed reaction is chenodeoxycholate + UDP-alpha-D-glucuronate = chenodeoxycholoyl-24-O-(beta-D-glucuronate) + UDP. It catalyses the reaction lithocholate + UDP-alpha-D-glucuronate = lithocholoyl-24-O-(beta-D-glucuronate) + UDP. The enzyme catalyses deoxycholate + UDP-alpha-D-glucuronate = deoxycholoyl-24-O-(beta-D-glucuronate) + UDP. It carries out the reaction hyocholate + UDP-alpha-D-glucuronate = hyocholoyl-24-O-(beta-D-glucuronate) + UDP. The catalysed reaction is hyodeoxycholate + UDP-alpha-D-glucuronate = hyodeoxycholate 6-O-(beta-D-glucuronate) + UDP + H(+). UDP-glucuronosyltransferase (UGT) that catalyzes phase II biotransformation reactions in which lipophilic substrates are conjugated with glucuronic acid to increase the metabolite's water solubility, thereby facilitating excretion into either the urine or bile. Essential for the elimination and detoxification of drugs, xenobiotics and endogenous compounds. Catalyzes the glucuronidation of endogenous estrogen hormone estradiol. Contributes to bile acid (BA) detoxification by catalyzing the glucuronidation of BA substrates, which are natural detergents for dietary lipids absorption. Shows a potential role in detoxification of toxic waste compounds in the amniotic fluid before birth, and air-born chemical after birth. The sequence is that of UDP-glucuronosyltransferase 2A2 from Homo sapiens (Human).